A 217-amino-acid chain; its full sequence is 3,4-dihydroxy-2-butanone 4-phosphate synthase (217 aa).

D-ribulose 5-phosphate contacts are provided by residues 37–38 (RE), D42, 150–154 (RGGHT), and E174. E38 is a Mg(2+) binding site. H153 is a binding site for Mg(2+).

It belongs to the DHBP synthase family. In terms of assembly, homodimer. The cofactor is Mg(2+). Requires Mn(2+) as cofactor.

It carries out the reaction D-ribulose 5-phosphate = (2S)-2-hydroxy-3-oxobutyl phosphate + formate + H(+). The protein operates within cofactor biosynthesis; riboflavin biosynthesis; 2-hydroxy-3-oxobutyl phosphate from D-ribulose 5-phosphate: step 1/1. Its function is as follows. Catalyzes the conversion of D-ribulose 5-phosphate to formate and 3,4-dihydroxy-2-butanone 4-phosphate. The protein is 3,4-dihydroxy-2-butanone 4-phosphate synthase of Klebsiella pneumoniae (strain 342).